We begin with the raw amino-acid sequence, 29 residues long: Protamine-like protein (29 aa).

The interval methionine 1–arginine 29 is disordered. Over residues proline 12–arginine 29 the composition is skewed to basic and acidic residues.

This Escherichia coli (strain K12) protein is Protamine-like protein (tpr).